Consider the following 128-residue polypeptide: Leucine-rich single-pass membrane protein 1 (128 aa).

Ser24 is subject to Phosphoserine. A helical transmembrane segment spans residues 66–86 (GLLLVLTVSLALVFFAIFLII). A coiled-coil region spans residues 90–111 (NQMEDVSRRLTAEGKDIDDLKK).

Its subcellular location is the membrane. The polypeptide is Leucine-rich single-pass membrane protein 1 (Lsmem1) (Mus musculus (Mouse)).